We begin with the raw amino-acid sequence, 348 residues long: RNA 3'-terminal phosphate cyclase (348 aa).

ATP contacts are provided by residues Q107 and 290–294 (HLADQ). The active-site Tele-AMP-histidine intermediate is the H316.

This sequence belongs to the RNA 3'-terminal cyclase family. Type 1 subfamily.

It localises to the cytoplasm. The enzyme catalyses a 3'-end 3'-phospho-ribonucleotide-RNA + ATP = a 3'-end 2',3'-cyclophospho-ribonucleotide-RNA + AMP + diphosphate. Its function is as follows. Catalyzes the conversion of 3'-phosphate to a 2',3'-cyclic phosphodiester at the end of RNA. The mechanism of action of the enzyme occurs in 3 steps: (A) adenylation of the enzyme by ATP; (B) transfer of adenylate to an RNA-N3'P to produce RNA-N3'PP5'A; (C) and attack of the adjacent 2'-hydroxyl on the 3'-phosphorus in the diester linkage to produce the cyclic end product. The biological role of this enzyme is unknown but it is likely to function in some aspects of cellular RNA processing. The protein is RNA 3'-terminal phosphate cyclase of Nostoc punctiforme (strain ATCC 29133 / PCC 73102).